A 368-amino-acid chain; its full sequence is PPE family immunomodulator PPE68 (368 aa).

Disordered stretches follow at residues 255–280 (LGTS…LLRA) and 312–368 (AAAG…EDDW). The segment covering 312 to 327 (AAAGSSATGGAAPVGA) has biased composition (low complexity). A compositionally biased stretch (acidic residues) spans 354–368 (REEDDEDDWDEEDDW).

Belongs to the mycobacterial PPE family. In terms of assembly, homodimer. Interacts with PE35. PE35/PPE68 complex interacts with human TLR2.

The protein resides in the secreted. It localises to the cell wall. Its subcellular location is the cell membrane. The protein localises to the cell surface. Plays a major role in RD1-associated pathogenesis, and may contribute to the establishment and maintenance of M.tuberculosis infection. Together with PE35, stimulates the secretion of IL-10 and MCP-1 from human macrophages, via the interaction with human Toll-like receptor 2 (TLR2). The chain is PPE family immunomodulator PPE68 (PPE68) from Mycobacterium tuberculosis (strain CDC 1551 / Oshkosh).